The following is a 695-amino-acid chain: MSLVPKAGYPFIIYFLDNINKYISDKTIQTYLTAFQINVDNLKVINKQFIPEAYRIIKLFTTNTTIMFAIYNYIFHGISKIGFLEKFSEEQIKYITDLETTDTKLIACAGSGKTRSVIGRIKFMVEHGLADKDEIYAITFSKHAATDFHRRIRELFPDYENFCQLKNFSTIDSMAKSILCRVKHHRSENVEILSIALRNFLKEATDEEINSITKFKIIKHLFIDEAQDLNNIQFDIALMFKKHFGTTIHLCGDPNQNIYQFRRSSNSYLMEFPAKKFELTLNFRSTQEIIDFSECLKPIATTRSVSGTNKIGPKVTIMTKQAIQIHKLILYFLKQYEKKNDLSNIAIICPTRGTGVNANTGLAMIFNFLKSNHIKVNQLYCESSSDERKRLVDRIPGHINLLTYHGTKGLEFDTVFVMDFYHSLLNIEPTYEEHNINQYLLYVATSRAISKMFICTYINNYGGYLNHWITKVDPKYYLIDSQPKIHKLTFRNEEIFDSNGVTELLEKLSEEDLYSIYELIKVNTFYEKRIFPDHTDIDRGKDEALYGIFCEELFYLCYYLNKKLEPRRFELIEKIVKSKFIIVENDLECNILKKFINTNNLTWTQFDQNKNNFRKDVIKLVEKYFSRNVELNDSIICTNDFINIVEANKIDIRDTYNRYLQPDKYQYNYNNIIFDLFYLVVVQYAYDINHYIYIK.

In terms of domain architecture, UvrD-like helicase ATP-binding spans Lys-86–Asn-499. Ala-107 to Thr-114 serves as a coordination point for ATP.

The protein belongs to the helicase family. UvrD subfamily.

It catalyses the reaction Couples ATP hydrolysis with the unwinding of duplex DNA by translocating in the 3'-5' direction.. It carries out the reaction ATP + H2O = ADP + phosphate + H(+). Its function is as follows. ATP-dependent DNA helicase. This Acanthamoeba polyphaga mimivirus (APMV) protein is Putative ATP-dependent DNA helicase R568.